We begin with the raw amino-acid sequence, 147 residues long: Hemoglobin subunit epsilon (147 aa).

Residues 3–147 (HFTAEEKAII…VATALAHKYH (145 aa)) enclose the Globin domain. Phosphoserine occurs at positions 14 and 51. Heme b-binding residues include His-64 and His-93.

The protein belongs to the globin family. In terms of assembly, heterotetramer of two alpha chains and two epsilon chains in early embryonic hemoglobin Gower-2; two zeta chains and two epsilon chains in early embryonic hemoglobin Gower-1. Red blood cells.

In terms of biological role, the epsilon chain is a beta-type chain of early mammalian embryonic hemoglobin. The chain is Hemoglobin subunit epsilon (HBE1) from Otolemur crassicaudatus (Brown greater galago).